We begin with the raw amino-acid sequence, 202 residues long: Prephenate decarboxylase (202 aa).

This sequence belongs to the prephenate decarboxylase family.

The enzyme catalyses prephenate + H(+) = 3-[(4R)-4-hydroxycyclohexa-1,5-dien-1-yl]-2-oxopropanoate + CO2. Its function is as follows. In vivo, involved in the biosynthesis of 2-carboxy-6-hydroxyoctahydroindole (Choi) present in the nonribosomal glycopeptides aeruginoside 126A and B. AerD is an unusual prephenate decarboxylase that avoids the typical aromatization of the cyclohexadienol ring of prephenate. AerD catalyzes the protonation at C8 followed by decarboxylation to produce the dihydro-4-hydroxyphenylpyruvate regioisomer A258 (H2HPP A258)(3-(4-hydroxycyclohexa- 1,5-dienyl)-2-oxopropanoic acid), which is able to undergo a nonenzymatic isomerization to produce dihydro-4-hydroxyphenylpyruvate regioisomer A295 (H2HPP A295)(3-(4-hydroxycyclohex-2-enylidene)-2-oxopropanoic acid). This chain is Prephenate decarboxylase, found in Planktothrix agardhii (strain NIVA-CYA 126/8).